We begin with the raw amino-acid sequence, 197 residues long: Nucleoid occlusion factor SlmA (197 aa).

The HTH tetR-type domain occupies 7–67 (INRREHILQC…GLIEFIEESL (61 aa)). Positions 30–49 (TTAKLASEVGVSEAALYRHF) form a DNA-binding region, H-T-H motif. A coiled-coil region spans residues 109 to 136 (DALLGENERLRSRISNLFAKIETQLKQI).

Belongs to the nucleoid occlusion factor SlmA family. In terms of assembly, homodimer. Interacts with FtsZ.

It is found in the cytoplasm. The protein resides in the nucleoid. Functionally, required for nucleoid occlusion (NO) phenomenon, which prevents Z-ring formation and cell division over the nucleoid. Acts as a DNA-associated cell division inhibitor that binds simultaneously chromosomal DNA and FtsZ, and disrupts the assembly of FtsZ polymers. SlmA-DNA-binding sequences (SBS) are dispersed on non-Ter regions of the chromosome, preventing FtsZ polymerization at these regions. This Shewanella baltica (strain OS223) protein is Nucleoid occlusion factor SlmA.